We begin with the raw amino-acid sequence, 190 residues long: ATP synthase subunit b, chloroplastic (190 aa).

A helical membrane pass occupies residues 35 to 55; the sequence is LSVVLGVLIFFGKGVCASCLL.

Belongs to the ATPase B chain family. F-type ATPases have 2 components, F(1) - the catalytic core - and F(0) - the membrane proton channel. F(1) has five subunits: alpha(3), beta(3), gamma(1), delta(1), epsilon(1). F(0) has four main subunits: a(1), b(1), b'(1) and c(10-14). The alpha and beta chains form an alternating ring which encloses part of the gamma chain. F(1) is attached to F(0) by a central stalk formed by the gamma and epsilon chains, while a peripheral stalk is formed by the delta, b and b' chains.

The protein resides in the plastid. Its subcellular location is the chloroplast thylakoid membrane. F(1)F(0) ATP synthase produces ATP from ADP in the presence of a proton or sodium gradient. F-type ATPases consist of two structural domains, F(1) containing the extramembraneous catalytic core and F(0) containing the membrane proton channel, linked together by a central stalk and a peripheral stalk. During catalysis, ATP synthesis in the catalytic domain of F(1) is coupled via a rotary mechanism of the central stalk subunits to proton translocation. Its function is as follows. Component of the F(0) channel, it forms part of the peripheral stalk, linking F(1) to F(0). This Coffea arabica (Arabian coffee) protein is ATP synthase subunit b, chloroplastic.